Here is a 349-residue protein sequence, read N- to C-terminus: Hydroxymethylglutaryl-CoA synthase (349 aa).

The (3S)-3-hydroxy-3-methylglutaryl-CoA site is built by aspartate 29 and alanine 30. The active-site Proton donor/acceptor is the glutamate 81. The (3S)-3-hydroxy-3-methylglutaryl-CoA site is built by cysteine 113 and threonine 154. Catalysis depends on cysteine 113, which acts as the Acyl-thioester intermediate. Position 202 (arginine 202) interacts with CoA. The (3S)-3-hydroxy-3-methylglutaryl-CoA site is built by threonine 204 and histidine 237. Histidine 237 serves as the catalytic Proton donor/acceptor. Lysine 242 contacts CoA. Residues arginine 246, asparagine 269, and serine 299 each contribute to the (3S)-3-hydroxy-3-methylglutaryl-CoA site.

Belongs to the thiolase-like superfamily. Archaeal HMG-CoA synthase family. As to quaternary structure, interacts with acetoacetyl-CoA thiolase that catalyzes the precedent step in the pathway and with a DUF35 protein. The acetoacetyl-CoA thiolase/HMG-CoA synthase complex channels the intermediate via a fused CoA-binding site, which allows for efficient coupling of the endergonic thiolase reaction with the exergonic HMGCS reaction.

It catalyses the reaction acetoacetyl-CoA + acetyl-CoA + H2O = (3S)-3-hydroxy-3-methylglutaryl-CoA + CoA + H(+). It participates in metabolic intermediate biosynthesis; (R)-mevalonate biosynthesis; (R)-mevalonate from acetyl-CoA: step 2/3. Functionally, catalyzes the condensation of acetyl-CoA with acetoacetyl-CoA to form 3-hydroxy-3-methylglutaryl-CoA (HMG-CoA). Functions in the mevalonate (MVA) pathway leading to isopentenyl diphosphate (IPP), a key precursor for the biosynthesis of isoprenoid compounds that are building blocks of archaeal membrane lipids. The protein is Hydroxymethylglutaryl-CoA synthase of Methanococcoides burtonii (strain DSM 6242 / NBRC 107633 / OCM 468 / ACE-M).